Reading from the N-terminus, the 302-residue chain is AP-1 complex-associated regulatory protein (302 aa).

The residue at position 29 (Ser-29) is a Phosphoserine. Residues 78-138 (DSIAEKQKDL…ERQRIVQQYH (61 aa)) are interaction with AP1G1. Residues 80 to 138 (IAEKQKDLDKKIQKELALQEEKLRLEEEALYAAQREAARAAKQRKLLEQERQRIVQQYH) are a coiled coil. The segment covering 188–206 (CDLMTKTKSTSGNDDSTSL) has biased composition (polar residues). The tract at residues 188–258 (CDLMTKTKST…TSASDDSNGL (71 aa)) is disordered. The interval 199–215 (GNDDSTSLDLEWEDEEG) is sufficient for association with the Arp2/3 complex. A compositionally biased stretch (basic and acidic residues) spans 221–233 (PMRERSKTEEDIL). Ser-226 is subject to Phosphoserine. The residue at position 228 (Thr-228) is a Phosphothreonine. Residues 242 to 255 (KKTGSNPTSASDDS) show a composition bias toward polar residues.

Interacts (via coiled-coil domain) with AP1G1 (via GAE domain). Interacts with KIF5B. Associates with the Arp2/3 complex. Post-translationally, palmitoylated.

Its subcellular location is the golgi apparatus. It is found in the trans-Golgi network. It localises to the late endosome. The protein localises to the early endosome. Necessary for adaptor protein complex 1 (AP-1)-dependent transport between the trans-Golgi network and endosomes. Regulates the membrane association of AP1G1/gamma1-adaptin, one of the subunits of the AP-1 adaptor complex. The direct interaction with AP1G1/gamma1-adaptin attenuates the release of the AP-1 complex from membranes. Regulates endosomal membrane traffic via association with AP-1 and KIF5B thus linking kinesin-based plus-end-directed microtubular transport to AP-1-dependent membrane traffic. May act as effector of AP-1 in calcium-induced endo-lysosome secretion. Inhibits Arp2/3 complex function; negatively regulates cell spreading, size and motility via intracellular sequestration of the Arp2/3 complex. This chain is AP-1 complex-associated regulatory protein (AP1AR), found in Homo sapiens (Human).